The primary structure comprises 329 residues: Fructose-1,6-bisphosphatase class 1 2 (329 aa).

Mg(2+)-binding residues include Glu92, Asp111, Leu113, and Asp114. Residues 114–117 (DGSS) and Asn206 contribute to the substrate site. Glu278 serves as a coordination point for Mg(2+).

Belongs to the FBPase class 1 family. In terms of assembly, homotetramer. The cofactor is Mg(2+).

The protein resides in the cytoplasm. The enzyme catalyses beta-D-fructose 1,6-bisphosphate + H2O = beta-D-fructose 6-phosphate + phosphate. It functions in the pathway carbohydrate biosynthesis; gluconeogenesis. This chain is Fructose-1,6-bisphosphatase class 1 2, found in Xanthobacter autotrophicus (strain ATCC BAA-1158 / Py2).